The following is a 214-amino-acid chain: Pyridoxine/pyridoxamine 5'-phosphate oxidase (214 aa).

Substrate-binding positions include Arg8 to Tyr11 and Lys66. Residues Arg61–Lys66, Phe76–Thr77, Arg82, Lys83, and Gln105 each bind FMN. The substrate site is built by Tyr123, Arg127, and Ser131. FMN-binding positions include Gln140–Ser141 and Trp184. Substrate is bound at residue Arg190–His192. Arg194 contacts FMN.

It belongs to the pyridoxamine 5'-phosphate oxidase family. Homodimer. FMN is required as a cofactor.

It carries out the reaction pyridoxamine 5'-phosphate + O2 + H2O = pyridoxal 5'-phosphate + H2O2 + NH4(+). The catalysed reaction is pyridoxine 5'-phosphate + O2 = pyridoxal 5'-phosphate + H2O2. Its pathway is cofactor metabolism; pyridoxal 5'-phosphate salvage; pyridoxal 5'-phosphate from pyridoxamine 5'-phosphate: step 1/1. It functions in the pathway cofactor metabolism; pyridoxal 5'-phosphate salvage; pyridoxal 5'-phosphate from pyridoxine 5'-phosphate: step 1/1. In terms of biological role, catalyzes the oxidation of either pyridoxine 5'-phosphate (PNP) or pyridoxamine 5'-phosphate (PMP) into pyridoxal 5'-phosphate (PLP). The polypeptide is Pyridoxine/pyridoxamine 5'-phosphate oxidase (Burkholderia multivorans (strain ATCC 17616 / 249)).